Consider the following 185-residue polypeptide: Probable chorismate pyruvate-lyase 1 (185 aa).

3 residues coordinate substrate: R70, L108, and E166.

Belongs to the UbiC family.

Its subcellular location is the cytoplasm. It catalyses the reaction chorismate = 4-hydroxybenzoate + pyruvate. It functions in the pathway cofactor biosynthesis; ubiquinone biosynthesis. In terms of biological role, removes the pyruvyl group from chorismate, with concomitant aromatization of the ring, to provide 4-hydroxybenzoate (4HB) for the ubiquinone pathway. In Pseudomonas fluorescens (strain Pf0-1), this protein is Probable chorismate pyruvate-lyase 1.